A 584-amino-acid chain; its full sequence is Leucine-rich repeat and fibronectin type III domain-containing protein 1 (584 aa).

Residues 1–17 (MERLVFCVLVFGALAKA) form the signal peptide. Residues 18–51 (QLCPGRCICQTISPTLTLLCAKTGLLFVPPTVDR) enclose the LRRNT domain. At 18-494 (QLCPGRCICQ…VPSQFLGGTM (477 aa)) the chain is on the extracellular side. 7 LRR repeats span residues 52–73 (KTVELRLTDNFITAVRRKDFLN), 76–97 (SLVHLTLSRNTISQIAPHAFMG), 100–121 (SLRALHMDGNRLSVINSDQLKG), 124–145 (NLRHLILGNNQIHHIEESSFDE), 149–170 (TIEDLDLSYNNLRTLPWEAIAR), 173–194 (NINTLTLDHNLIDHIGVGTFTL), and 197–218 (KLVRLDMTSNRLQTLPPDTLFQ). A glycan (N-linked (GlcNAc...) asparagine) is linked at Asn73. The 47-residue stretch at 241-287 (NPLHCNCELLWLRRLTREDDLETCASPEHLMDKYFWSIQEEEFICEP) folds into the LRRCT domain. One can recognise an Ig-like domain in the interval 288 to 375 (PLITKHQVTK…GIATAAVHVH (88 aa)). Cys310 and Cys359 are disulfide-bonded. N-linked (GlcNAc...) asparagine glycosylation is found at Asn332, Asn341, Asn384, Asn408, and Asn421. Residues 393–414 (DPGLSDISTSSRSSSNDSKTHS) form a disordered region. The segment covering 397–409 (SDISTSSRSSSND) has biased composition (low complexity). Residues 495–515 (IIIIGGIIVASVLVFIIILMI) form a helical membrane-spanning segment. Residues 516–584 (RYKAYSGGGG…MVLPILHLLF (69 aa)) lie on the Cytoplasmic side of the membrane. Positions 539–564 (HVHSQTNGSRSAATKQSEEPPESPAG) are disordered. Residues 540–553 (VHSQTNGSRSAATK) are compositionally biased toward polar residues.

It belongs to the LRFN family.

It localises to the membrane. The protein resides in the synapse. Involved in the regulation of excitatory synapses. The polypeptide is Leucine-rich repeat and fibronectin type III domain-containing protein 1 (lrfn1) (Danio rerio (Zebrafish)).